A 200-amino-acid chain; its full sequence is ATP-dependent Clp protease proteolytic subunit 3 (200 aa).

Residue Ser101 is the Nucleophile of the active site. His126 is a catalytic residue.

The protein belongs to the peptidase S14 family. Fourteen ClpP subunits assemble into 2 heptameric rings which stack back to back to give a disk-like structure with a central cavity, resembling the structure of eukaryotic proteasomes.

The protein resides in the cytoplasm. It catalyses the reaction Hydrolysis of proteins to small peptides in the presence of ATP and magnesium. alpha-casein is the usual test substrate. In the absence of ATP, only oligopeptides shorter than five residues are hydrolyzed (such as succinyl-Leu-Tyr-|-NHMec, and Leu-Tyr-Leu-|-Tyr-Trp, in which cleavage of the -Tyr-|-Leu- and -Tyr-|-Trp bonds also occurs).. Functionally, cleaves peptides in various proteins in a process that requires ATP hydrolysis. Has a chymotrypsin-like activity. Plays a major role in the degradation of misfolded proteins. This is ATP-dependent Clp protease proteolytic subunit 3 from Synechococcus sp. (strain CC9902).